Here is a 231-residue protein sequence, read N- to C-terminus: Aquaporin Z (231 aa).

2 helical membrane-spanning segments follow: residues 9–29 (CFGT…AAGF) and 34–54 (IGFA…AFAV). Positions 63 to 65 (NPA) match the NPA 1 motif. Helical transmembrane passes span 82-102 (VGYV…LYLI), 129-149 (YSML…LLVI), and 156-176 (FAPA…IHLI). An NPA 2 motif is present at residues 186 to 188 (NPA). Residues 202–222 (LEQLWFFWVVPIVGGIIGGLI) traverse the membrane as a helical segment.

Belongs to the MIP/aquaporin (TC 1.A.8) family. As to quaternary structure, homotetramer.

It is found in the cell inner membrane. It carries out the reaction H2O(in) = H2O(out). Its function is as follows. Channel that permits osmotically driven movement of water in both directions. It is involved in the osmoregulation and in the maintenance of cell turgor during volume expansion in rapidly growing cells. It mediates rapid entry or exit of water in response to abrupt changes in osmolarity. This is Aquaporin Z from Escherichia coli O157:H7.